A 160-amino-acid chain; its full sequence is Large ribosomal subunit protein uL22c (160 aa).

The protein belongs to the universal ribosomal protein uL22 family. In terms of assembly, part of the 50S ribosomal subunit.

It is found in the plastid. The protein localises to the chloroplast. Its function is as follows. This protein binds specifically to 23S rRNA. In terms of biological role, the globular domain of the protein is located near the polypeptide exit tunnel on the outside of the subunit, while an extended beta-hairpin is found that lines the wall of the exit tunnel in the center of the 70S ribosome. The polypeptide is Large ribosomal subunit protein uL22c (rpl22) (Lepidium virginicum (Virginia pepperweed)).